The sequence spans 340 residues: MSATLINVDDGDAMEPTLQSILDQRSLRWIFVGGKGGVGKTTTSCSLAIQLAKVRRSVLLISTDPAHNLSDAFSQKFGKEARLIDGFENLSAMEIDPNGSIQDLLAGQGEGDAGADMGGMGGMMQDLAFAIPGIDEAMSFAEVLKQVKSLSYETIIFDTAPTGHTLRFLQFPSVLEKALAKVSQLSNQYGPLLNGFLGSNGTLPNGQNLNEMMEKLETLRATISEVNTQFKDERLTTFVCVCIPEFLSLYETERMIQELASYGIDTHSIVVNQLLFPKPGSDCEQCTARRRMQKKYLEQIEELYDEFNVVKMPLLVEEVRGKERLERFSEMLVTPFVPPS.

35–42 contributes to the ATP binding site; it reads KGGVGKTT. Residue aspartate 64 is part of the active site. The ATP site is built by glutamate 245 and asparagine 272. Residues cysteine 283 and cysteine 286 each contribute to the Zn(2+) site.

This sequence belongs to the arsA ATPase family. Homodimer.

It localises to the cytoplasm. The protein localises to the endoplasmic reticulum. Its function is as follows. ATPase required for the post-translational delivery of tail-anchored (TA) proteins to the endoplasmic reticulum. Recognizes and selectively binds the transmembrane domain of TA proteins in the cytosol. This complex then targets to the endoplasmic reticulum by membrane-bound receptors, where the tail-anchored protein is released for insertion. This process is regulated by ATP binding and hydrolysis. ATP binding drives the homodimer towards the closed dimer state, facilitating recognition of newly synthesized TA membrane proteins. ATP hydrolysis is required for insertion. Subsequently, the homodimer reverts towards the open dimer state, lowering its affinity for the membrane-bound receptor, and returning it to the cytosol to initiate a new round of targeting. This Chaetomium globosum (strain ATCC 6205 / CBS 148.51 / DSM 1962 / NBRC 6347 / NRRL 1970) (Soil fungus) protein is ATPase GET3.